Consider the following 197-residue polypeptide: Probable UbiX-like flavin prenyltransferase (197 aa).

FMN contacts are provided by residues 9–11 (GAT), S36, 87–90 (SMKT), and R122.

The protein belongs to the UbiX/PAD1 family. YclB subfamily. In terms of assembly, homododecamer.

It carries out the reaction dimethylallyl phosphate + FMNH2 = prenylated FMNH2 + phosphate. In terms of biological role, flavin prenyltransferase that catalyzes the synthesis of the prenylated FMN cofactor (prenyl-FMN) for phenolic acid decarboxylase C. Involved in the decarboxylation and detoxification of phenolic derivatives under both aerobic and anaerobic conditions. The sequence is that of Probable UbiX-like flavin prenyltransferase (ecdB) from Escherichia coli.